The chain runs to 122 residues: Large ribosomal subunit protein uL14 (122 aa).

It belongs to the universal ribosomal protein uL14 family. Part of the 50S ribosomal subunit. Forms a cluster with proteins L3 and L19. In the 70S ribosome, L14 and L19 interact and together make contacts with the 16S rRNA in bridges B5 and B8.

Its function is as follows. Binds to 23S rRNA. Forms part of two intersubunit bridges in the 70S ribosome. The chain is Large ribosomal subunit protein uL14 from Phytoplasma mali (strain AT).